The primary structure comprises 313 residues: Beta-lactamase FAR-1 (313 aa).

Residues M1–G28 form the signal peptide. The N-palmitoyl cysteine moiety is linked to residue C29. C29 is lipidated: S-diacylglycerol cysteine. The active-site Acyl-ester intermediate is S94. S154 lines the substrate pocket. The active-site Proton acceptor is the E190. K258–G260 serves as a coordination point for substrate.

Belongs to the class-A beta-lactamase family.

Its subcellular location is the cell membrane. The enzyme catalyses a beta-lactam + H2O = a substituted beta-amino acid. Its activity is regulated as follows. Inhibited by clavulanic acid, and at a low level by tazobactam and sulbactam. Its function is as follows. Confers high levels of resistance to amoxicillin, benzylpenicillin, piperacillin, ticarcillin and cephalothin. Also hydrolyzes aztreonam at a low level. Not active against ceftazidime, cefotaxime and imipenem. In Nocardia farcinica (strain IFM 10152), this protein is Beta-lactamase FAR-1 (bla).